A 668-amino-acid chain; its full sequence is ATP-dependent RNA helicase MSS116, mitochondrial (668 aa).

A mitochondrion-targeting transit peptide spans 1 to 38 (MLKQLSRSLGIRSSPIVANLIRSKQVCTRGFHISLVKQ). The Q motif motif lies at 87–115 (DFKGKGYIHDSIINSLHKNDFKELTPIQQ). A Helicase ATP-binding domain is found at 119-300 (VPIFNTEKGL…KKHIHPEYEF (182 aa)). 132–139 (AKTGTGKT) lines the ATP pocket. The DEAD box motif lies at 242–245 (DEAD). Positions 332-501 (SLSELHGIMK…NIIDQIESPL (170 aa)) constitute a Helicase C-terminal domain. Residues 585 to 668 (YSDFSRSGMS…EHRRIRDHDE (84 aa)) form a disordered region. Over residues 586-597 (SDFSRSGMSQRP) the composition is skewed to polar residues. Positions 609–636 (NGRGKYGNNRNNDWSYQNKNRYNNNNNR) are enriched in low complexity. Positions 637-668 (QTERSYDSDRKSHNDWKYEKKFEHRRIRDHDE) are enriched in basic and acidic residues.

Belongs to the DEAD box helicase family. DDX18/HAS1 subfamily.

The protein resides in the mitochondrion matrix. The catalysed reaction is ATP + H2O = ADP + phosphate + H(+). In terms of biological role, ATP-dependent RNA helicase required for mitochondrial splicing of group I and II introns. Also required for efficient mitochondrial translation. The chain is ATP-dependent RNA helicase MSS116, mitochondrial (MSS116) from Candida albicans (strain SC5314 / ATCC MYA-2876) (Yeast).